Reading from the N-terminus, the 863-residue chain is Alanine--tRNA ligase (863 aa).

His552, His556, Cys654, and His658 together coordinate Zn(2+).

Belongs to the class-II aminoacyl-tRNA synthetase family. Zn(2+) serves as cofactor.

The protein localises to the cytoplasm. The enzyme catalyses tRNA(Ala) + L-alanine + ATP = L-alanyl-tRNA(Ala) + AMP + diphosphate. Its function is as follows. Catalyzes the attachment of alanine to tRNA(Ala) in a two-step reaction: alanine is first activated by ATP to form Ala-AMP and then transferred to the acceptor end of tRNA(Ala). Also edits incorrectly charged Ser-tRNA(Ala) and Gly-tRNA(Ala) via its editing domain. In Nitrosomonas europaea (strain ATCC 19718 / CIP 103999 / KCTC 2705 / NBRC 14298), this protein is Alanine--tRNA ligase.